A 189-amino-acid polypeptide reads, in one-letter code: Chitin synthase 2 (189 aa).

The protein belongs to the chitin synthase family. Class II subfamily.

The protein resides in the cell membrane. The catalysed reaction is [(1-&gt;4)-N-acetyl-beta-D-glucosaminyl](n) + UDP-N-acetyl-alpha-D-glucosamine = [(1-&gt;4)-N-acetyl-beta-D-glucosaminyl](n+1) + UDP + H(+). Polymerizes chitin, a structural polymer of the cell wall and septum, by transferring the sugar moiety of UDP-GlcNAc to the non-reducing end of the growing chitin polymer. This is Chitin synthase 2 (CHS2) from Exophiala exophialae (Black yeast-like fungus).